A 393-amino-acid chain; its full sequence is NAD(P)H-quinone oxidoreductase subunit H, chloroplastic (393 aa).

It belongs to the complex I 49 kDa subunit family. In terms of assembly, NDH is composed of at least 16 different subunits, 5 of which are encoded in the nucleus.

It is found in the plastid. The protein resides in the chloroplast thylakoid membrane. The enzyme catalyses a plastoquinone + NADH + (n+1) H(+)(in) = a plastoquinol + NAD(+) + n H(+)(out). It carries out the reaction a plastoquinone + NADPH + (n+1) H(+)(in) = a plastoquinol + NADP(+) + n H(+)(out). NDH shuttles electrons from NAD(P)H:plastoquinone, via FMN and iron-sulfur (Fe-S) centers, to quinones in the photosynthetic chain and possibly in a chloroplast respiratory chain. The immediate electron acceptor for the enzyme in this species is believed to be plastoquinone. Couples the redox reaction to proton translocation, and thus conserves the redox energy in a proton gradient. The sequence is that of NAD(P)H-quinone oxidoreductase subunit H, chloroplastic from Oenothera argillicola (Appalachian evening primrose).